A 311-amino-acid polypeptide reads, in one-letter code: Bifunctional protein FolD (311 aa).

174 to 176 (GKG) contributes to the NADP(+) binding site.

It belongs to the tetrahydrofolate dehydrogenase/cyclohydrolase family. As to quaternary structure, homodimer.

The enzyme catalyses (6R)-5,10-methylene-5,6,7,8-tetrahydrofolate + NADP(+) = (6R)-5,10-methenyltetrahydrofolate + NADPH. It carries out the reaction (6R)-5,10-methenyltetrahydrofolate + H2O = (6R)-10-formyltetrahydrofolate + H(+). Its pathway is one-carbon metabolism; tetrahydrofolate interconversion. Its function is as follows. Catalyzes the oxidation of 5,10-methylenetetrahydrofolate to 5,10-methenyltetrahydrofolate and then the hydrolysis of 5,10-methenyltetrahydrofolate to 10-formyltetrahydrofolate. The protein is Bifunctional protein FolD of Pyrobaculum arsenaticum (strain DSM 13514 / JCM 11321 / PZ6).